We begin with the raw amino-acid sequence, 28 residues long: U1-poneritoxin-Da4a (28 aa).

An Alanine amide modification is found at Ala28.

As to expression, expressed by the venom gland.

The protein resides in the secreted. In terms of biological role, shows a broad spectrum of activity against both Gram-positive and Gram-negative bacteria. Also has antimicrobial activity against S.cerevisiae. Has insecticidal and non-hemolytic activity. The protein is U1-poneritoxin-Da4a of Dinoponera australis (Giant neotropical hunting ant).